The chain runs to 1123 residues: Phytochrome 1 (1123 aa).

Low complexity predominate over residues 1–15; the sequence is MSTPKKTYSSTSSAK. The disordered stretch occupies residues 1–20; the sequence is MSTPKKTYSSTSSAKSKAHS. A GAF domain is found at 216-395; the sequence is DIGLLCDTVV…VFGLQLNMEV (180 aa). C321 serves as a coordination point for phytochromobilin. 2 consecutive PAS domains span residues 610 to 681 and 744 to 815; these read VANE…LRGE and DYKT…TKFM. Residues 895-1115 enclose the Histidine kinase domain; sequence YIRQEIKNPL…VVNVELPMAQ (221 aa).

The protein belongs to the phytochrome family. In terms of assembly, homodimer. In terms of processing, contains one covalently linked phytochromobilin chromophore.

The protein resides in the cytoplasm. Its function is as follows. Regulatory photoreceptor which exists in two forms that are reversibly interconvertible by light: the Pr form that absorbs maximally in the red region of the spectrum and the Pfr form that absorbs maximally in the far-red region. Photoconversion of Pr to Pfr induces an array of morphogenetic responses, whereas reconversion of Pfr to Pr cancels the induction of those responses. Pfr controls the expression of a number of nuclear genes including those encoding the small subunit of ribulose-bisphosphate carboxylase, chlorophyll A/B binding protein, protochlorophyllide reductase, rRNA, etc. It also controls the expression of its own gene(s) in a negative feedback fashion. Mediates chloroplast avoidance movement in cytoplasm. The polypeptide is Phytochrome 1 (PHY1) (Physcomitrium patens (Spreading-leaved earth moss)).